We begin with the raw amino-acid sequence, 263 residues long: 3-deoxy-manno-octulosonate cytidylyltransferase 1 (263 aa).

It belongs to the KdsB family.

It localises to the cytoplasm. It catalyses the reaction 3-deoxy-alpha-D-manno-oct-2-ulosonate + CTP = CMP-3-deoxy-beta-D-manno-octulosonate + diphosphate. The protein operates within nucleotide-sugar biosynthesis; CMP-3-deoxy-D-manno-octulosonate biosynthesis; CMP-3-deoxy-D-manno-octulosonate from 3-deoxy-D-manno-octulosonate and CTP: step 1/1. Its pathway is bacterial outer membrane biogenesis; lipopolysaccharide biosynthesis. Its function is as follows. Activates KDO (a required 8-carbon sugar) for incorporation into bacterial lipopolysaccharide in Gram-negative bacteria. The sequence is that of 3-deoxy-manno-octulosonate cytidylyltransferase 1 from Burkholderia ambifaria (strain MC40-6).